A 184-amino-acid polypeptide reads, in one-letter code: MSSIRFIACLYLISIFGNCHEDPYYQPFDKLNITLDIYTYEDLVPYTVDNDLPNPNDDTTSFVKIYFKNFWITVMTKWCAPFIDTVSVYTSHDNLNIQFYSRDEYDTQSEDKICTIDVKARCKHLTKREVTVQKEAYRYSLSSDLSCFDSIDLDIDLIETNSTDTTVLKSYELMLPKRAKSIHN.

The signal sequence occupies residues 1–21 (MSSIRFIACLYLISIFGNCHE).

Belongs to the poxviridae C8 protein family.

The chain is Protein C8 from Vaccinia virus (strain Copenhagen) (VACV).